The chain runs to 284 residues: 4-diphosphocytidyl-2-C-methyl-D-erythritol kinase (284 aa).

Lys14 is an active-site residue. Residue Pro98–Ser108 coordinates ATP. Residue Asp140 is part of the active site.

This sequence belongs to the GHMP kinase family. IspE subfamily.

It catalyses the reaction 4-CDP-2-C-methyl-D-erythritol + ATP = 4-CDP-2-C-methyl-D-erythritol 2-phosphate + ADP + H(+). Its pathway is isoprenoid biosynthesis; isopentenyl diphosphate biosynthesis via DXP pathway; isopentenyl diphosphate from 1-deoxy-D-xylulose 5-phosphate: step 3/6. Functionally, catalyzes the phosphorylation of the position 2 hydroxy group of 4-diphosphocytidyl-2C-methyl-D-erythritol. The protein is 4-diphosphocytidyl-2-C-methyl-D-erythritol kinase of Shewanella woodyi (strain ATCC 51908 / MS32).